Consider the following 457-residue polypeptide: Ribosomal protein uS12 methylthiotransferase RimO (457 aa).

The MTTase N-terminal domain maps to 30–140; sequence PTIGMVSLGC…VLDAVHGAVP (111 aa). [4Fe-4S] cluster-binding residues include C39, C75, C104, C171, C175, and C178. The 230-residue stretch at 157–386 folds into the Radical SAM core domain; that stretch reads LTPRHFSYLK…MQKAQAISEA (230 aa). Residues 389–456 form the TRAM domain; sequence AARIGQRLEV…EYDLWGRAVL (68 aa).

It belongs to the methylthiotransferase family. RimO subfamily. [4Fe-4S] cluster serves as cofactor.

The protein localises to the cytoplasm. It catalyses the reaction L-aspartate(89)-[ribosomal protein uS12]-hydrogen + (sulfur carrier)-SH + AH2 + 2 S-adenosyl-L-methionine = 3-methylsulfanyl-L-aspartate(89)-[ribosomal protein uS12]-hydrogen + (sulfur carrier)-H + 5'-deoxyadenosine + L-methionine + A + S-adenosyl-L-homocysteine + 2 H(+). Catalyzes the methylthiolation of an aspartic acid residue of ribosomal protein uS12. The sequence is that of Ribosomal protein uS12 methylthiotransferase RimO from Cereibacter sphaeroides (strain ATCC 17025 / ATH 2.4.3) (Rhodobacter sphaeroides).